The primary structure comprises 96 residues: Exodeoxyribonuclease 7 small subunit (96 aa).

Residues 61 to 79 (ALTKDESQKTNKTGFRTES) are compositionally biased toward basic and acidic residues. The tract at residues 61 to 96 (ALTKDESQKTNKTGFRTESKSTSQTSSDSVLEEDLF) is disordered. Low complexity predominate over residues 80–89 (KSTSQTSSDS).

It belongs to the XseB family. Heterooligomer composed of large and small subunits.

Its subcellular location is the cytoplasm. It catalyses the reaction Exonucleolytic cleavage in either 5'- to 3'- or 3'- to 5'-direction to yield nucleoside 5'-phosphates.. Its function is as follows. Bidirectionally degrades single-stranded DNA into large acid-insoluble oligonucleotides, which are then degraded further into small acid-soluble oligonucleotides. This chain is Exodeoxyribonuclease 7 small subunit, found in Leptospira borgpetersenii serovar Hardjo-bovis (strain JB197).